Here is a 272-residue protein sequence, read N- to C-terminus: tRNA uridine(34) hydroxylase (272 aa).

A Rhodanese domain is found at 121–217 (SRSDVYTIDT…YFKSTGNINN (97 aa)). Catalysis depends on Cys177, which acts as the Cysteine persulfide intermediate.

Belongs to the TrhO family.

The enzyme catalyses uridine(34) in tRNA + AH2 + O2 = 5-hydroxyuridine(34) in tRNA + A + H2O. Catalyzes oxygen-dependent 5-hydroxyuridine (ho5U) modification at position 34 in tRNAs. In Ehrlichia ruminantium (strain Welgevonden), this protein is tRNA uridine(34) hydroxylase.